Reading from the N-terminus, the 306-residue chain is Glutaminase (306 aa).

Substrate-binding residues include Ser-64, Asn-115, Glu-159, Asn-166, Tyr-190, Tyr-242, and Val-260.

This sequence belongs to the glutaminase family. Homotetramer.

It carries out the reaction L-glutamine + H2O = L-glutamate + NH4(+). This Vibrio atlanticus (strain LGP32) (Vibrio splendidus (strain Mel32)) protein is Glutaminase.